A 452-amino-acid chain; its full sequence is Phosphoglucosamine mutase (452 aa).

Ser98 acts as the Phosphoserine intermediate in catalysis. Positions 98, 239, 241, and 243 each coordinate Mg(2+). At Ser98 the chain carries Phosphoserine.

This sequence belongs to the phosphohexose mutase family. Requires Mg(2+) as cofactor. Post-translationally, activated by phosphorylation.

It carries out the reaction alpha-D-glucosamine 1-phosphate = D-glucosamine 6-phosphate. Functionally, catalyzes the conversion of glucosamine-6-phosphate to glucosamine-1-phosphate. The polypeptide is Phosphoglucosamine mutase (Anaplasma marginale (strain St. Maries)).